The following is a 443-amino-acid chain: Signal recognition particle 54 kDa protein (443 aa).

GTP-binding positions include Gly-107–Thr-114, Asp-189–Arg-193, and Thr-247–Asp-250.

This sequence belongs to the GTP-binding SRP family. SRP54 subfamily. In terms of assembly, part of the signal recognition particle protein translocation system, which is composed of SRP and FtsY. Archaeal SRP consists of a 7S RNA molecule of 300 nucleotides and two protein subunits: SRP54 and SRP19.

The protein resides in the cytoplasm. It carries out the reaction GTP + H2O = GDP + phosphate + H(+). Involved in targeting and insertion of nascent membrane proteins into the cytoplasmic membrane. Binds to the hydrophobic signal sequence of the ribosome-nascent chain (RNC) as it emerges from the ribosomes. The SRP-RNC complex is then targeted to the cytoplasmic membrane where it interacts with the SRP receptor FtsY. In Pyrococcus horikoshii (strain ATCC 700860 / DSM 12428 / JCM 9974 / NBRC 100139 / OT-3), this protein is Signal recognition particle 54 kDa protein.